The chain runs to 174 residues: Cytochrome c oxidase subunit 5A, mitochondrial (174 aa).

Residues M1–S29 constitute a mitochondrion transit peptide.

This sequence belongs to the cytochrome c oxidase subunit 5A family. In terms of assembly, component of the cytochrome c oxidase (complex IV, CIV), a multisubunit enzyme composed of a catalytic core of 3 subunits and several supernumerary subunits. The complex exists as a monomer or a dimer and forms supercomplexes (SCs) in the inner mitochondrial membrane with ubiquinol-cytochrome c oxidoreductase (cytochrome b-c1 complex, complex III, CIII).

The protein localises to the mitochondrion inner membrane. Its pathway is energy metabolism; oxidative phosphorylation. Its function is as follows. Component of the cytochrome c oxidase, the last enzyme in the mitochondrial electron transport chain which drives oxidative phosphorylation. The respiratory chain contains 3 multisubunit complexes succinate dehydrogenase (complex II, CII), ubiquinol-cytochrome c oxidoreductase (cytochrome b-c1 complex, complex III, CIII) and cytochrome c oxidase (complex IV, CIV), that cooperate to transfer electrons derived from NADH and succinate to molecular oxygen, creating an electrochemical gradient over the inner membrane that drives transmembrane transport and the ATP synthase. Cytochrome c oxidase is the component of the respiratory chain that catalyzes the reduction of oxygen to water. Electrons originating from reduced cytochrome c in the intermembrane space (IMS) are transferred via the dinuclear copper A center (CU(A)) of subunit 2 and heme A of subunit 1 to the active site in subunit 1, a binuclear center (BNC) formed by heme A3 and copper B (CU(B)). The BNC reduces molecular oxygen to 2 water molecules using 4 electrons from cytochrome c in the IMS and 4 protons from the mitochondrial matrix. The chain is Cytochrome c oxidase subunit 5A, mitochondrial from Caenorhabditis elegans.